The chain runs to 167 residues: Lipoprotein signal peptidase (167 aa).

Helical transmembrane passes span Trp67–Ala87 and Leu91–Ile111. Active-site residues include Asp118 and Asp136. The helical transmembrane segment at Phe127–Ile147 threads the bilayer.

Belongs to the peptidase A8 family.

The protein localises to the cell inner membrane. The enzyme catalyses Release of signal peptides from bacterial membrane prolipoproteins. Hydrolyzes -Xaa-Yaa-Zaa-|-(S,diacylglyceryl)Cys-, in which Xaa is hydrophobic (preferably Leu), and Yaa (Ala or Ser) and Zaa (Gly or Ala) have small, neutral side chains.. It functions in the pathway protein modification; lipoprotein biosynthesis (signal peptide cleavage). Functionally, this protein specifically catalyzes the removal of signal peptides from prolipoproteins. This chain is Lipoprotein signal peptidase, found in Beijerinckia indica subsp. indica (strain ATCC 9039 / DSM 1715 / NCIMB 8712).